The chain runs to 221 residues: PKHD-type hydroxylase PMT_0286 (221 aa).

Positions 80-174 (HIHGVMFSRS…RLVCVGWIQS (95 aa)) constitute a Fe2OG dioxygenase domain. Positions 98, 100, and 155 each coordinate Fe cation. Arg165 is a binding site for 2-oxoglutarate.

Requires Fe(2+) as cofactor. L-ascorbate is required as a cofactor.

This chain is PKHD-type hydroxylase PMT_0286, found in Prochlorococcus marinus (strain MIT 9313).